The primary structure comprises 209 residues: Type III pantothenate kinase (209 aa).

Residue 5 to 12 coordinates ATP; sequence DIGNSNAN. Substrate contacts are provided by residues Tyr-68 and 72-75; that span reads GIDR. Asp-74 serves as the catalytic Proton acceptor. Position 89 (Asp-89) interacts with K(+). Ser-92 serves as a coordination point for ATP. Thr-144 is a substrate binding site.

This sequence belongs to the type III pantothenate kinase family. In terms of assembly, homodimer. NH4(+) serves as cofactor. It depends on K(+) as a cofactor.

The protein resides in the cytoplasm. The catalysed reaction is (R)-pantothenate + ATP = (R)-4'-phosphopantothenate + ADP + H(+). Its pathway is cofactor biosynthesis; coenzyme A biosynthesis; CoA from (R)-pantothenate: step 1/5. Catalyzes the phosphorylation of pantothenate (Pan), the first step in CoA biosynthesis. The polypeptide is Type III pantothenate kinase (Campylobacter jejuni (strain RM1221)).